The chain runs to 218 residues: Small ribosomal subunit protein uS3 (218 aa).

Position 1 is an N-acetylmethionine (M1). A KH type-2 domain is found at 23–95 (LNELFTREFN…TVVLFAEKIL (73 aa)).

This sequence belongs to the universal ribosomal protein uS3 family.

The polypeptide is Small ribosomal subunit protein uS3 (rps3) (Dictyostelium discoideum (Social amoeba)).